The chain runs to 224 residues: Prolactin-3D1 (224 aa).

Positions 1–29 (MQLTLNLSGSAGMQLLLLVSSLLLWENVS) are cleaved as a signal peptide. Cystine bridges form between Cys-81–Cys-199 and Cys-216–Cys-224. 2 N-linked (GlcNAc...) asparagine glycosylation sites follow: Asn-109 and Asn-158.

Belongs to the somatotropin/prolactin family.

The protein resides in the secreted. The chain is Prolactin-3D1 (Prl3d1) from Mus musculus (Mouse).